The chain runs to 582 residues: ATP-dependent lipid A-core flippase (582 aa).

5 helical membrane passes run 27–47 (LIVA…MISL), 69–89 (LIIF…TYCL), 142–162 (ALVS…LMFY), 165–185 (WQLS…IGVV), and 249–269 (AAAN…VLYL). One can recognise an ABC transmembrane type-1 domain in the interval 28–310 (IVAVIALVIN…LTNVTSQFQR (283 aa)). The region spanning 342–578 (VSVKDVSFTY…NGAYAQLHRI (237 aa)) is the ABC transporter domain. 376 to 383 (GRSGSGKS) contributes to the ATP binding site.

The protein belongs to the ABC transporter superfamily. Lipid exporter (TC 3.A.1.106) family. Homodimer.

It localises to the cell inner membrane. It carries out the reaction ATP + H2O + lipid A-core oligosaccharideSide 1 = ADP + phosphate + lipid A-core oligosaccharideSide 2.. Involved in lipopolysaccharide (LPS) biosynthesis. Translocates lipid A-core from the inner to the outer leaflet of the inner membrane. Transmembrane domains (TMD) form a pore in the inner membrane and the ATP-binding domain (NBD) is responsible for energy generation. The protein is ATP-dependent lipid A-core flippase of Vibrio parahaemolyticus serotype O3:K6 (strain RIMD 2210633).